The following is a 190-amino-acid chain: Potassium-transporting ATPase KdpC subunit (190 aa).

A helical membrane pass occupies residues 13 to 33 (VGFLLLTLVCGVIYPGVVTII).

This sequence belongs to the KdpC family. The system is composed of three essential subunits: KdpA, KdpB and KdpC.

The protein localises to the cell membrane. Functionally, part of the high-affinity ATP-driven potassium transport (or Kdp) system, which catalyzes the hydrolysis of ATP coupled with the electrogenic transport of potassium into the cytoplasm. This subunit acts as a catalytic chaperone that increases the ATP-binding affinity of the ATP-hydrolyzing subunit KdpB by the formation of a transient KdpB/KdpC/ATP ternary complex. The sequence is that of Potassium-transporting ATPase KdpC subunit from Listeria innocua serovar 6a (strain ATCC BAA-680 / CLIP 11262).